The chain runs to 205 residues: Ribosomal RNA small subunit methyltransferase G (205 aa).

Residues Gly-73, Leu-78, 124–125 (VE), and Arg-138 contribute to the S-adenosyl-L-methionine site.

Belongs to the methyltransferase superfamily. RNA methyltransferase RsmG family.

Its subcellular location is the cytoplasm. It catalyses the reaction guanosine(527) in 16S rRNA + S-adenosyl-L-methionine = N(7)-methylguanosine(527) in 16S rRNA + S-adenosyl-L-homocysteine. Specifically methylates the N7 position of guanine in position 527 of 16S rRNA. The chain is Ribosomal RNA small subunit methyltransferase G from Actinobacillus pleuropneumoniae serotype 5b (strain L20).